A 253-amino-acid polypeptide reads, in one-letter code: Phosphate import ATP-binding protein PstB (253 aa).

In terms of domain architecture, ABC transporter spans 8–248 (IQVRDLDLFY…PRDKRTEDYI (241 aa)). 40–47 (GPSGCGKS) serves as a coordination point for ATP.

Belongs to the ABC transporter superfamily. Phosphate importer (TC 3.A.1.7) family. As to quaternary structure, the complex is composed of two ATP-binding proteins (PstB), two transmembrane proteins (PstC and PstA) and a solute-binding protein (PstS).

The protein localises to the cell membrane. The enzyme catalyses phosphate(out) + ATP + H2O = ADP + 2 phosphate(in) + H(+). Part of the ABC transporter complex PstSACB involved in phosphate import. Responsible for energy coupling to the transport system. The polypeptide is Phosphate import ATP-binding protein PstB (Clostridium perfringens (strain ATCC 13124 / DSM 756 / JCM 1290 / NCIMB 6125 / NCTC 8237 / Type A)).